The chain runs to 148 residues: 3-hydroxyacyl-[acyl-carrier-protein] dehydratase FabZ (148 aa).

H48 is an active-site residue.

Belongs to the thioester dehydratase family. FabZ subfamily.

It localises to the cytoplasm. The catalysed reaction is a (3R)-hydroxyacyl-[ACP] = a (2E)-enoyl-[ACP] + H2O. In terms of biological role, involved in unsaturated fatty acids biosynthesis. Catalyzes the dehydration of short chain beta-hydroxyacyl-ACPs and long chain saturated and unsaturated beta-hydroxyacyl-ACPs. The sequence is that of 3-hydroxyacyl-[acyl-carrier-protein] dehydratase FabZ from Campylobacter fetus subsp. fetus (strain 82-40).